A 111-amino-acid polypeptide reads, in one-letter code: Nucleoid-associated protein PSEEN1789 (111 aa).

Disordered regions lie at residues 1–25 (MMKG…KMQE) and 89–111 (NSQD…KMPF).

It belongs to the YbaB/EbfC family. In terms of assembly, homodimer.

It localises to the cytoplasm. The protein resides in the nucleoid. Binds to DNA and alters its conformation. May be involved in regulation of gene expression, nucleoid organization and DNA protection. This is Nucleoid-associated protein PSEEN1789 from Pseudomonas entomophila (strain L48).